The primary structure comprises 214 residues: Rac-like GTP-binding protein 1 (214 aa).

GTP contacts are provided by residues 17–24 (GDGAVGKT), 20–25 (AVGKTC), threonine 42, 64–68 (DTAGQ), glycine 67, 122–125 (TKLD), 123–125 (KLD), and 164–165 (SK). An Effector region motif is present at residues 39–47 (YIPTVFDNF).

It belongs to the small GTPase superfamily. Rho family. As to quaternary structure, may interact with MPK1/MAPK6. Binds to RBOHB, preferentially in the GTP-bound form. Interacts with CCR1 in a GTP-dependent manner. Post-translationally, may be palmitoylated.

Its subcellular location is the cytoplasm. The protein resides in the membrane. Functionally, small GTPase playing a general role in disease resistance signaling pathway. Acts downstream of heterotrimeric G protein alpha subunit. Regulates cell death and reactive oxygen species production, probably through NADPH oxidase. Also involved in sphingolipid elicitor (SE)-dependent defense signaling. Activates phytoalexin production and alters defense-related genes. Down-regulates metallothionein 2b, a reactive oxygen scavenger. May control lignin synthesis through regulation of both NADPH oxidase and CCR1 activities during defense responses. Stimulates lignin synthesis in suspension cell culture. In Oryza sativa subsp. japonica (Rice), this protein is Rac-like GTP-binding protein 1 (RAC1).